The following is a 352-amino-acid chain: Biotin synthase (352 aa).

The region spanning 44 to 262 is the Radical SAM core domain; that stretch reads NRVQVSTLLS…LAVARIMMPK (219 aa). 3 residues coordinate [4Fe-4S] cluster: C59, C63, and C66. Residues C103, C134, C194, and R266 each coordinate [2Fe-2S] cluster.

This sequence belongs to the radical SAM superfamily. Biotin synthase family. As to quaternary structure, homodimer. [4Fe-4S] cluster serves as cofactor. Requires [2Fe-2S] cluster as cofactor.

The catalysed reaction is (4R,5S)-dethiobiotin + (sulfur carrier)-SH + 2 reduced [2Fe-2S]-[ferredoxin] + 2 S-adenosyl-L-methionine = (sulfur carrier)-H + biotin + 2 5'-deoxyadenosine + 2 L-methionine + 2 oxidized [2Fe-2S]-[ferredoxin]. It participates in cofactor biosynthesis; biotin biosynthesis; biotin from 7,8-diaminononanoate: step 2/2. Catalyzes the conversion of dethiobiotin (DTB) to biotin by the insertion of a sulfur atom into dethiobiotin via a radical-based mechanism. This Ectopseudomonas mendocina (strain ymp) (Pseudomonas mendocina) protein is Biotin synthase.